Reading from the N-terminus, the 1217-residue chain is Disease resistance protein RPS4 (1217 aa).

One can recognise a TIR domain in the interval 14 to 175; it reads PQHQVFINFR…EIVKAVKTAL (162 aa). NAD(+) is bound at residue 23-28; it reads RGADLR. Residues 33–34 form an important for interaction with RRS1 region; it reads SH. Glutamate 88 is an active-site residue. An NB-ARC domain is found at 211-472; the sequence is EQRLKDLEEK…FRSQDKDYVE (262 aa). LRR repeat units follow at residues 581–606, 614–636, 637–659, 682–706, 708–728, 729–749, 750–774, 796–818, 819–842, 843–860, and 861–887; these read MGNL…KINI, LKEV…DFNP, INLV…DKDT, AEKL…MKKM, MLAF…EMNL, ISLK…PLIS, DNIE…KLQR, LKAL…EIDI, SFLN…SVQY, LCLS…GISQ, and LSQL…NLQC. The interval 1161–1195 is disordered; the sequence is TTEGVDGRVNKKKKTRMDNGRPKKKQRSGRDDNQT. Positions 1170-1177 match the Nuclear localization signal motif; that stretch reads NKKKKTRM.

The protein belongs to the disease resistance TIR-NB-LRR family. As to quaternary structure, interacts with EDS1. Interacts with SRFR1. Interacts with RRS1.

Its subcellular location is the endomembrane system. It localises to the cytoplasm. It is found in the nucleus. The enzyme catalyses NAD(+) + H2O = ADP-D-ribose + nicotinamide + H(+). In terms of biological role, disease resistance (R) protein that specifically recognizes the AvrRps4 type III effector avirulence protein from P.syringae. Resistance proteins guard the plant against pathogens that contain an appropriate avirulence protein via an indirect interaction with this avirulence protein. That triggers a defense system including the hypersensitive response, which restricts the pathogen growth. Probably acts as a NAD(+) hydrolase (NADase): in response to activation, catalyzes cleavage of NAD(+) into ADP-D-ribose (ADPR) and nicotinamide; NAD(+) cleavage triggering a defense system that promotes cell death. The combined presence of both regular and alternative RPS4 transcripts with truncated open reading frames (ORFs) is necessary for function. RPS4 function is regulated at multiple levels, including gene expression, alternative splicing, and protein stability. When over-expressed, confers temperature-conditioned EDS1-dependent auto-immunity. Heterodimerization with RRS1 is required to form a functional complex to recognize AvrRps4 and PopP2. Abscisic acid deficiency enhances nuclear accumulation of RPS4 and its cell death-inducing activity. The protein is Disease resistance protein RPS4 of Arabidopsis thaliana (Mouse-ear cress).